The chain runs to 293 residues: Pantothenate synthetase (293 aa).

30-37 provides a ligand contact to ATP; sequence MGYLHKGH. The active-site Proton donor is the His-37. Gln-61 provides a ligand contact to (R)-pantoate. Gln-61 contributes to the beta-alanine binding site. 147–150 contributes to the ATP binding site; that stretch reads GEKD. Gln-153 contributes to the (R)-pantoate binding site. Residues Val-176 and 184–187 contribute to the ATP site; that span reads CSSR.

It belongs to the pantothenate synthetase family. As to quaternary structure, homodimer.

The protein resides in the cytoplasm. It carries out the reaction (R)-pantoate + beta-alanine + ATP = (R)-pantothenate + AMP + diphosphate + H(+). It functions in the pathway cofactor biosynthesis; (R)-pantothenate biosynthesis; (R)-pantothenate from (R)-pantoate and beta-alanine: step 1/1. Its function is as follows. Catalyzes the condensation of pantoate with beta-alanine in an ATP-dependent reaction via a pantoyl-adenylate intermediate. The polypeptide is Pantothenate synthetase (Brucella abortus (strain S19)).